The following is a 546-amino-acid chain: Probable protein kinase UbiB (546 aa).

The Protein kinase domain occupies 123-501 (DFDETPLASA…SRRQGQARYL (379 aa)). Residues 129-137 (LASASIAQV) and Lys152 each bind ATP. Residue Asp287 is the Proton acceptor of the active site. Helical transmembrane passes span 498-517 (ARYL…FLLT) and 522-541 (IEWG…LGWL).

It belongs to the ABC1 family. UbiB subfamily.

Its subcellular location is the cell inner membrane. Its pathway is cofactor biosynthesis; ubiquinone biosynthesis [regulation]. Its function is as follows. Is probably a protein kinase regulator of UbiI activity which is involved in aerobic coenzyme Q (ubiquinone) biosynthesis. This Aeromonas hydrophila subsp. hydrophila (strain ATCC 7966 / DSM 30187 / BCRC 13018 / CCUG 14551 / JCM 1027 / KCTC 2358 / NCIMB 9240 / NCTC 8049) protein is Probable protein kinase UbiB.